The chain runs to 187 residues: Peptidyl-tRNA hydrolase (187 aa).

Y15 is a binding site for tRNA. The active-site Proton acceptor is the H20. Residues Y64, N66, and N112 each contribute to the tRNA site.

This sequence belongs to the PTH family. Monomer.

It is found in the cytoplasm. It carries out the reaction an N-acyl-L-alpha-aminoacyl-tRNA + H2O = an N-acyl-L-amino acid + a tRNA + H(+). Its function is as follows. Hydrolyzes ribosome-free peptidyl-tRNAs (with 1 or more amino acids incorporated), which drop off the ribosome during protein synthesis, or as a result of ribosome stalling. Catalyzes the release of premature peptidyl moieties from peptidyl-tRNA molecules trapped in stalled 50S ribosomal subunits, and thus maintains levels of free tRNAs and 50S ribosomes. The protein is Peptidyl-tRNA hydrolase of Phocaeicola vulgatus (strain ATCC 8482 / DSM 1447 / JCM 5826 / CCUG 4940 / NBRC 14291 / NCTC 11154) (Bacteroides vulgatus).